The following is a 237-amino-acid chain: tRNA (guanine-N(7)-)-methyltransferase (237 aa).

S-adenosyl-L-methionine-binding residues include Glu-68, Glu-93, Asp-120, and Asp-143. Asp-143 is a catalytic residue. Substrate-binding positions include Lys-147, Asp-179, and 216 to 219; that span reads TKFE.

This sequence belongs to the class I-like SAM-binding methyltransferase superfamily. TrmB family.

The catalysed reaction is guanosine(46) in tRNA + S-adenosyl-L-methionine = N(7)-methylguanosine(46) in tRNA + S-adenosyl-L-homocysteine. The protein operates within tRNA modification; N(7)-methylguanine-tRNA biosynthesis. In terms of biological role, catalyzes the formation of N(7)-methylguanine at position 46 (m7G46) in tRNA. In Shewanella halifaxensis (strain HAW-EB4), this protein is tRNA (guanine-N(7)-)-methyltransferase.